A 163-amino-acid polypeptide reads, in one-letter code: MPSLDVVSVVDMQAMDNAVNNAKRDLGNRYDFKNAKYELVLNRKDKKIEIVAEDEFKLKAIIETLIQQCVRFKLDSKCLDVADAHTVSLGAAKTEIKIKDGLTKETASKITKFIKSTKLKLDSAIQGEQIRITGKQIDDLQEIMQLLNGQDFDVPLQYVNMKR.

The protein belongs to the YajQ family.

Nucleotide-binding protein. The chain is Nucleotide-binding protein DET1318 from Dehalococcoides mccartyi (strain ATCC BAA-2266 / KCTC 15142 / 195) (Dehalococcoides ethenogenes (strain 195)).